Reading from the N-terminus, the 338-residue chain is NADPH dehydrogenase (338 aa).

22–25 (SPMC) serves as a coordination point for FMN. Tyrosine 27 serves as a coordination point for substrate. FMN is bound by residues alanine 59 and glutamine 101. 163-166 (HAAH) is a binding site for substrate. FMN contacts are provided by residues arginine 214 and 306–307 (GR).

Belongs to the NADH:flavin oxidoreductase/NADH oxidase family. NamA subfamily. In terms of assembly, homotetramer. FMN serves as cofactor.

The catalysed reaction is A + NADPH + H(+) = AH2 + NADP(+). Its function is as follows. Catalyzes the reduction of the double bond of an array of alpha,beta-unsaturated aldehydes and ketones. It also reduces the nitro group of nitroester and nitroaromatic compounds. It could have a role in detoxification processes. The sequence is that of NADPH dehydrogenase from Listeria monocytogenes serotype 4a (strain HCC23).